The primary structure comprises 399 residues: 4-hydroxy-3-methylbut-2-enyl diphosphate reductase (399 aa).

[4Fe-4S] cluster is bound at residue C66. H96 provides a ligand contact to (2E)-4-hydroxy-3-methylbut-2-enyl diphosphate. H96 serves as a coordination point for dimethylallyl diphosphate. Position 96 (H96) interacts with isopentenyl diphosphate. Residue C157 coordinates [4Fe-4S] cluster. H185 contacts (2E)-4-hydroxy-3-methylbut-2-enyl diphosphate. Dimethylallyl diphosphate is bound at residue H185. An isopentenyl diphosphate-binding site is contributed by H185. The active-site Proton donor is the E187. T250 contacts (2E)-4-hydroxy-3-methylbut-2-enyl diphosphate. Position 288 (C288) interacts with [4Fe-4S] cluster. The (2E)-4-hydroxy-3-methylbut-2-enyl diphosphate site is built by S317, S318, N319, and S380. Residues S317, S318, N319, and S380 each contribute to the dimethylallyl diphosphate site. S317, S318, N319, and S380 together coordinate isopentenyl diphosphate.

This sequence belongs to the IspH family. [4Fe-4S] cluster is required as a cofactor.

The enzyme catalyses isopentenyl diphosphate + 2 oxidized [2Fe-2S]-[ferredoxin] + H2O = (2E)-4-hydroxy-3-methylbut-2-enyl diphosphate + 2 reduced [2Fe-2S]-[ferredoxin] + 2 H(+). It catalyses the reaction dimethylallyl diphosphate + 2 oxidized [2Fe-2S]-[ferredoxin] + H2O = (2E)-4-hydroxy-3-methylbut-2-enyl diphosphate + 2 reduced [2Fe-2S]-[ferredoxin] + 2 H(+). The protein operates within isoprenoid biosynthesis; dimethylallyl diphosphate biosynthesis; dimethylallyl diphosphate from (2E)-4-hydroxy-3-methylbutenyl diphosphate: step 1/1. It participates in isoprenoid biosynthesis; isopentenyl diphosphate biosynthesis via DXP pathway; isopentenyl diphosphate from 1-deoxy-D-xylulose 5-phosphate: step 6/6. Functionally, catalyzes the conversion of 1-hydroxy-2-methyl-2-(E)-butenyl 4-diphosphate (HMBPP) into a mixture of isopentenyl diphosphate (IPP) and dimethylallyl diphosphate (DMAPP). Acts in the terminal step of the DOXP/MEP pathway for isoprenoid precursor biosynthesis. This is 4-hydroxy-3-methylbut-2-enyl diphosphate reductase from Synechococcus sp. (strain CC9605).